Reading from the N-terminus, the 274-residue chain is Large ribosomal subunit protein uL2 (274 aa).

Positions 224 to 274 are disordered; the sequence is VAMNPVDHPHGGGEGRTSGGRHPVTPWGIPTKGYKTRRNKRSNKLIVQKRK. Residues 257 to 274 show a composition bias toward basic residues; it reads YKTRRNKRSNKLIVQKRK.

Belongs to the universal ribosomal protein uL2 family. Part of the 50S ribosomal subunit. Forms a bridge to the 30S subunit in the 70S ribosome.

Its function is as follows. One of the primary rRNA binding proteins. Required for association of the 30S and 50S subunits to form the 70S ribosome, for tRNA binding and peptide bond formation. It has been suggested to have peptidyltransferase activity; this is somewhat controversial. Makes several contacts with the 16S rRNA in the 70S ribosome. In Francisella tularensis subsp. holarctica (strain FTNF002-00 / FTA), this protein is Large ribosomal subunit protein uL2.